Here is a 446-residue protein sequence, read N- to C-terminus: L-2-hydroxyglutarate dehydrogenase, mitochondrial (446 aa).

A mitochondrion-targeting transit peptide spans 1-28; the sequence is MKNSSSMLKGVKSFIGSGIYTNKPIYDV.

This sequence belongs to the L2HGDH family. Requires FAD as cofactor.

It localises to the mitochondrion. It catalyses the reaction (S)-2-hydroxyglutarate + A = 2-oxoglutarate + AH2. This chain is L-2-hydroxyglutarate dehydrogenase, mitochondrial (l2hgdh), found in Dictyostelium discoideum (Social amoeba).